We begin with the raw amino-acid sequence, 388 residues long: UDP-N-acetylglucosamine--N-acetylmuramyl-(pentapeptide) pyrophosphoryl-undecaprenol N-acetylglucosamine transferase (388 aa).

Residues 15–17 (TGG), Asn125, Arg168, Ser196, and Gln297 each bind UDP-N-acetyl-alpha-D-glucosamine.

It belongs to the glycosyltransferase 28 family. MurG subfamily.

Its subcellular location is the cell inner membrane. The catalysed reaction is di-trans,octa-cis-undecaprenyl diphospho-N-acetyl-alpha-D-muramoyl-L-alanyl-D-glutamyl-meso-2,6-diaminopimeloyl-D-alanyl-D-alanine + UDP-N-acetyl-alpha-D-glucosamine = di-trans,octa-cis-undecaprenyl diphospho-[N-acetyl-alpha-D-glucosaminyl-(1-&gt;4)]-N-acetyl-alpha-D-muramoyl-L-alanyl-D-glutamyl-meso-2,6-diaminopimeloyl-D-alanyl-D-alanine + UDP + H(+). Its pathway is cell wall biogenesis; peptidoglycan biosynthesis. Functionally, cell wall formation. Catalyzes the transfer of a GlcNAc subunit on undecaprenyl-pyrophosphoryl-MurNAc-pentapeptide (lipid intermediate I) to form undecaprenyl-pyrophosphoryl-MurNAc-(pentapeptide)GlcNAc (lipid intermediate II). In Novosphingobium aromaticivorans (strain ATCC 700278 / DSM 12444 / CCUG 56034 / CIP 105152 / NBRC 16084 / F199), this protein is UDP-N-acetylglucosamine--N-acetylmuramyl-(pentapeptide) pyrophosphoryl-undecaprenol N-acetylglucosamine transferase.